The primary structure comprises 264 residues: Purine nucleoside phosphorylase slr1573 (264 aa).

The Zn(2+) site is built by H61, C104, and H121.

This sequence belongs to the purine nucleoside phosphorylase YfiH/LACC1 family. Homodimer. It depends on Cu(2+) as a cofactor. Requires Zn(2+) as cofactor.

The catalysed reaction is adenosine + phosphate = alpha-D-ribose 1-phosphate + adenine. It catalyses the reaction S-methyl-5'-thioadenosine + phosphate = 5-(methylsulfanyl)-alpha-D-ribose 1-phosphate + adenine. The enzyme catalyses inosine + phosphate = alpha-D-ribose 1-phosphate + hypoxanthine. It carries out the reaction adenosine + H2O + H(+) = inosine + NH4(+). In terms of biological role, purine nucleoside enzyme that catalyzes the phosphorolysis of adenosine and inosine nucleosides, yielding D-ribose 1-phosphate and the respective free bases, adenine and hypoxanthine. Also catalyzes the phosphorolysis of S-methyl-5'-thioadenosine into adenine and S-methyl-5-thio-alpha-D-ribose 1-phosphate. Also has adenosine deaminase activity. In Synechocystis sp. (strain ATCC 27184 / PCC 6803 / Kazusa), this protein is Purine nucleoside phosphorylase slr1573.